A 554-amino-acid chain; its full sequence is Putative F-box/LRR-repeat protein 8 (554 aa).

The 47-residue stretch at 71 to 117 folds into the F-box domain; it reads YDYISNLPDECLSLIFQSLTCADLKRCSLVCRRWLTIEGQCRHRLSL. LRR repeat units lie at residues 119–144, 148–173, 174–199, 205–224, 250–275, 301–325, 326–351, 354–379, 383–404, 405–428, 430–455, and 456–480; these read AQSD…VLRS, SLGI…KLRG, CPEI…SFGS, KGMN…SVKR, KELH…KIFR, RIQM…HLVK, TPDC…HIDG, TNRI…VLIG, TKLS…ALCG, SDTV…KLCI, NCPI…KVKK, and CRGV…NLDA.

In Arabidopsis thaliana (Mouse-ear cress), this protein is Putative F-box/LRR-repeat protein 8 (FBL8).